The primary structure comprises 564 residues: Alpha-amylase 3 (564 aa).

Positions 1 to 21 (MFGVYFVLLFLSSALIHVANA) are cleaved as a signal peptide. C51 and C59 form a disulfide bridge. Positions 56 and 105 each coordinate substrate. N143 lines the Ca(2+) pocket. A disulfide bridge connects residues C172 and C188. A glycan (N-linked (GlcNAc...) asparagine) is linked at N181. D198 provides a ligand contact to Ca(2+). Residue R227 participates in substrate binding. D229 contacts Ca(2+). The active-site Nucleophile is D229. A substrate-binding site is contributed by 232–233 (KM). An N-linked (GlcNAc...) asparagine glycan is attached at N235. Ca(2+) is bound at residue E253. E253 serves as the catalytic Proton donor. A disulfide bridge links C263 with C306. Residues N282 and N305 are each glycosylated (N-linked (GlcNAc...) asparagine). Substrate-binding residues include D322 and R369. N-linked (GlcNAc...) asparagine glycosylation is found at N438, N447, and N498. S538 is lipidated: GPI-anchor amidated serine. A propeptide spans 539-564 (SSRLILSFKTLVFGLGVTAMLFVLFF) (removed in mature form).

The protein belongs to the glycosyl hydrolase 13 family. Requires Ca(2+) as cofactor. N-glycosylated.

It localises to the cell membrane. The catalysed reaction is Endohydrolysis of (1-&gt;4)-alpha-D-glucosidic linkages in polysaccharides containing three or more (1-&gt;4)-alpha-linked D-glucose units.. Functionally, has a role in cell wall biosynthesis where it is involved in maintaining cell wall strength and shape. The chain is Alpha-amylase 3 (aah3) from Schizosaccharomyces pombe (strain 972 / ATCC 24843) (Fission yeast).